The following is a 286-amino-acid chain: uncharacterized protein (286 aa).

This is an uncharacterized protein from Schizosaccharomyces pombe (strain 972 / ATCC 24843) (Fission yeast).